A 644-amino-acid chain; its full sequence is Ribonuclease R (644 aa).

Positions 211-529 constitute an RNB domain; that stretch reads RINYSHIPFI…LHRLLKELLF (319 aa). An S1 motif domain is found at 573 to 644; the sequence is LELLEKEFLG…ITERIKEHVS (72 aa).

This sequence belongs to the RNR ribonuclease family. RNase R subfamily.

It localises to the cytoplasm. It carries out the reaction Exonucleolytic cleavage in the 3'- to 5'-direction to yield nucleoside 5'-phosphates.. Its function is as follows. 3'-5' exoribonuclease that releases 5'-nucleoside monophosphates and is involved in maturation of structured RNAs. This is Ribonuclease R from Helicobacter pylori (strain ATCC 700392 / 26695) (Campylobacter pylori).